The chain runs to 217 residues: Uracil-DNA glycosylase (217 aa).

Catalysis depends on aspartate 62, which acts as the Proton acceptor.

This sequence belongs to the uracil-DNA glycosylase (UDG) superfamily. UNG family.

The protein localises to the cytoplasm. The catalysed reaction is Hydrolyzes single-stranded DNA or mismatched double-stranded DNA and polynucleotides, releasing free uracil.. Its function is as follows. Excises uracil residues from the DNA which can arise as a result of misincorporation of dUMP residues by DNA polymerase or due to deamination of cytosine. This chain is Uracil-DNA glycosylase, found in Streptococcus pneumoniae serotype 19F (strain G54).